A 149-amino-acid polypeptide reads, in one-letter code: Probable ubiquitin-conjugating enzyme E2 12 (149 aa).

Residues 1–15 show a composition bias toward basic and acidic residues; the sequence is MASKRISRELRDMQR. Residues 1–22 are disordered; that stretch reads MASKRISRELRDMQRHPPANCS. A UBC core domain is found at 1-148; sequence MASKRISREL…AQKWTQKYAM (148 aa). Residue cysteine 86 is the Glycyl thioester intermediate of the active site.

It belongs to the ubiquitin-conjugating enzyme family. As to expression, ubiquitously expressed at very low levels.

The catalysed reaction is S-ubiquitinyl-[E1 ubiquitin-activating enzyme]-L-cysteine + [E2 ubiquitin-conjugating enzyme]-L-cysteine = [E1 ubiquitin-activating enzyme]-L-cysteine + S-ubiquitinyl-[E2 ubiquitin-conjugating enzyme]-L-cysteine.. It functions in the pathway protein modification; protein ubiquitination. Its function is as follows. Accepts the ubiquitin from the E1 complex and catalyzes its covalent attachment to other proteins. The protein is Probable ubiquitin-conjugating enzyme E2 12 (UBC12) of Arabidopsis thaliana (Mouse-ear cress).